The primary structure comprises 294 residues: Foldase protein PrsA 1 (294 aa).

Positions 1-21 (MTKLKKVMISLVAATLLLLAG) are cleaved as a signal peptide. Cys22 carries the N-palmitoyl cysteine lipid modification. The S-diacylglycerol cysteine moiety is linked to residue Cys22. Positions 135-226 (EPNITVRHIL…YGYHLIQLVK (92 aa)) constitute a PpiC domain.

Belongs to the PrsA family.

Its subcellular location is the cell membrane. The enzyme catalyses [protein]-peptidylproline (omega=180) = [protein]-peptidylproline (omega=0). Its function is as follows. Plays a major role in protein secretion by helping the post-translocational extracellular folding of several secreted proteins. The polypeptide is Foldase protein PrsA 1 (prsA1) (Listeria innocua serovar 6a (strain ATCC BAA-680 / CLIP 11262)).